The primary structure comprises 183 residues: Large ribosomal subunit protein uL5 (183 aa).

The protein belongs to the universal ribosomal protein uL5 family. In terms of assembly, part of the 50S ribosomal subunit; part of the 5S rRNA/L5/L18/L25 subcomplex. Contacts the 5S rRNA and the P site tRNA. Forms a bridge to the 30S subunit in the 70S ribosome.

Functionally, this is one of the proteins that bind and probably mediate the attachment of the 5S RNA into the large ribosomal subunit, where it forms part of the central protuberance. In the 70S ribosome it contacts protein S13 of the 30S subunit (bridge B1b), connecting the 2 subunits; this bridge is implicated in subunit movement. Contacts the P site tRNA; the 5S rRNA and some of its associated proteins might help stabilize positioning of ribosome-bound tRNAs. This Pseudothermotoga lettingae (strain ATCC BAA-301 / DSM 14385 / NBRC 107922 / TMO) (Thermotoga lettingae) protein is Large ribosomal subunit protein uL5.